Consider the following 621-residue polypeptide: UvrABC system protein C (621 aa).

In terms of domain architecture, GIY-YIG spans 11-90 (TTPGVYLYKD…IKKHRPRYNI (80 aa)). Residues 200 to 235 (KELVELLQKDMLYASEALEFEKAATLRDQIQAIKHT) enclose the UVR domain.

This sequence belongs to the UvrC family. Interacts with UvrB in an incision complex.

It is found in the cytoplasm. Its function is as follows. The UvrABC repair system catalyzes the recognition and processing of DNA lesions. UvrC both incises the 5' and 3' sides of the lesion. The N-terminal half is responsible for the 3' incision and the C-terminal half is responsible for the 5' incision. This chain is UvrABC system protein C, found in Lawsonia intracellularis (strain PHE/MN1-00).